The following is a 490-amino-acid chain: Prostaglandin E2 receptor EP4 subtype (490 aa).

The Extracellular segment spans residues 1-19 (MSTPGVNASASLSPDRLNS). Asn-7 carries N-linked (GlcNAc...) asparagine glycosylation. A helical membrane pass occupies residues 20 to 43 (PVTIPAVMFIFGVVGNLVAIVVLC). At 44 to 55 (KSRKEQKETTFY) the chain is on the cytoplasmic side. Residues 56–79 (TLVCGLAVTDLLGTLLVSPVTIAT) traverse the membrane as a helical segment. Topologically, residues 80-96 (YMKGQWPGGQPLCEYST) are extracellular. The cysteines at positions 92 and 170 are disulfide-linked. A helical membrane pass occupies residues 97 to 115 (FILLFFSLSGLSIICAMSV). Over 116 to 135 (ERYLAINHAYFYSHYVDKRL) the chain is Cytoplasmic. Residues 136-160 (AGLTLFAVYASNVLFCALPNMGLGS) form a helical membrane-spanning segment. Topologically, residues 161 to 184 (SRLQYPDTWCFIDWTTNVTAHAAY) are extracellular. Residues 185–211 (SYMYAGFSSFLILATVLCNVLVCGALL) form a helical membrane-spanning segment. The Cytoplasmic portion of the chain corresponds to 212–269 (RMHRQFMRRTSLGTEQHHAAAAAVTSVASRGHPAASPALPRLSDFRRRRSFRRIAGAE). A helical transmembrane segment spans residues 270 to 297 (IQMVILLIATSLVVLICSIPLVVRVFVN). At 298-314 (QLYQPSLEREVSKNPDL) the chain is on the extracellular side. A helical transmembrane segment spans residues 315 to 334 (QAIRIASVNPILDPWIYILL). Residues 335–490 (RKTVLSKAIE…ETLNLSEKCI (156 aa)) lie on the Cytoplasmic side of the membrane. The segment at 359–378 (ERSGQHCSDSQRTSSAMSGH) is disordered. The span at 363–378 (QHCSDSQRTSSAMSGH) shows a compositional bias: polar residues. 4 positions are modified to phosphoserine: Ser-376, Ser-379, Ser-381, and Ser-384. Over residues 439–451 (SETSDSSQGQDSE) the composition is skewed to polar residues. Residues 439–477 (SETSDSSQGQDSESVLLVDEAGGSGRAGPAPKGSSLQVT) form a disordered region.

This sequence belongs to the G-protein coupled receptor 1 family. As to quaternary structure, interacts with FEM1A. Post-translationally, phosphorylation mediates agonist-mediated desensitization by promoting cytoplasmic retention.

It localises to the cell membrane. Receptor for prostaglandin E2 (PGE2). The activity of this receptor is mediated by G(s) proteins that stimulate adenylate cyclase. Has a relaxing effect on smooth muscle. May play an important role in regulating renal hemodynamics, intestinal epithelial transport, adrenal aldosterone secretion, and uterine function. The polypeptide is Prostaglandin E2 receptor EP4 subtype (PTGER4) (Pan troglodytes (Chimpanzee)).